A 472-amino-acid chain; its full sequence is Ribosomal RNA small subunit methyltransferase F (472 aa).

Residues 123–129 (AAAPGSK), Glu147, Asp174, and Asp192 each bind S-adenosyl-L-methionine. Cys245 acts as the Nucleophile in catalysis.

Belongs to the class I-like SAM-binding methyltransferase superfamily. RsmB/NOP family.

The protein resides in the cytoplasm. It carries out the reaction cytidine(1407) in 16S rRNA + S-adenosyl-L-methionine = 5-methylcytidine(1407) in 16S rRNA + S-adenosyl-L-homocysteine + H(+). Specifically methylates the cytosine at position 1407 (m5C1407) of 16S rRNA. This chain is Ribosomal RNA small subunit methyltransferase F, found in Vibrio vulnificus (strain CMCP6).